The chain runs to 525 residues: Histidine-rich glycoprotein (525 aa).

The N-terminal stretch at M1–A18 is a signal peptide. Positions L19 to Y122 constitute a Cystatin 1 domain. Intrachain disulfides connect C24–C504, C78–C89, C103–C124, C201–C414, and C216–C239. The interval G41 to K84 is interaction with ATP5F1A. 2 N-linked (GlcNAc...) asparagine glycosylation sites follow: N112 and N123. The 106-residue stretch at N135 to E240 folds into the Cystatin 2 domain. Phosphoserine is present on S145. N200 is a glycosylation site (N-linked (GlcNAc...) asparagine). Residues R275 to K445 form a disordered region. N-linked (GlcNAc...) asparagine glycans are attached at residues N322 and N330. Basic residues-rich tracts occupy residues H339–H392 and Q426–P443. Position 438 is a phosphoserine (S438).

As to quaternary structure, interacts with THBS1 (via the TSP type I repeats); the interaction blocks the antiangiogenic effect of THBS1 with CD36. Interacts with HPSE; the interaction is enhanced at acidic pH, partially inhibits binding of HPSE to cell surface receptors and modulates its enzymatic activity. Interacts (via the HRR domain) with TMP1; the interaction partially mediates the antiangiogenic properties of HRG. Interacts with kappa and lambda light chains of IgG molecules. Interacts with ATP5F1A; the interaction occurs on the surface of T-cells and alters their cell morphology in concert with CONA. Binds IgG molecules containing kappa and lambda light chains and inhibits the formation of insoluble immunoglobulin complexes. Interacts with F12; the interaction, which is enhanced in the presence of zinc ions and inhibited by heparin-binding to HRG, inhibits factor XII autoactivation and contact-initiated coagulation. Interacts with PLG (via its Kringle domains); the interaction tethers PLG to the cell surface and enhances its activation. Interacts (via the HRR domain) with TPM1; the interaction appears to contribute to the antiangiogenic properties of the HRR domain. Interacts with THBS2; the interaction blocks the antiangiogenic effect of THBS2 with CD36. In terms of processing, N-glycosylated. Post-translationally, proteolytic cleavage produces several HRG fragments which are mostly disulfide-linked and, therefore, not released. Cleavage by plasmin is inhibited in the presence of heparin, zinc ions or in an acidic environment. Cleavage reduces binding of HRG to heparan sulfate, but enhances the ability of HRG to bind and tether plasminogen to the cell surface. On platelet activation, releases a 33 kDa antiangiogenic peptide which encompasses the HRR. Also cleaved in the C-terminal by plasmin. In terms of tissue distribution, expressed in liver, blood plasma, serum and in platelets. Also present in fibrin clots, wound fluid from acute wounds and chronic leg ulcers.

It is found in the secreted. Functionally, plasma glycoprotein that binds a number of ligands such as heme, heparin, heparan sulfate, thrombospondin, plasminogen, and divalent metal ions. Inhibits rosette formation. Acts as an adapter protein and implicated in regulating many processes such as immune complex and pathogen clearance, cell adhesion, angiogenesis, coagulation and fibrinolysis. Mediates clearance of necrotic cells through enhancing the phagocytosis of necrotic cells in a heparan sulfate-dependent pathway. This process can be regulated by the presence of certain HRG ligands such as heparin and zinc ions. Binds to IgG subclasses of immunoglobins containing kappa and lambda light chains with different affinities regulating their clearance and inhibiting the formation of insoluble immune complexes. Tethers plasminogen to the cell surface. Binds T-cells and alters the cell morphology. Modulates angiogenesis by blocking the CD6-mediated antiangiongenic effect of thrombospondins, THBS1 and THBS2. In Rattus norvegicus (Rat), this protein is Histidine-rich glycoprotein (Hrg).